A 231-amino-acid chain; its full sequence is 2-C-methyl-D-erythritol 4-phosphate cytidylyltransferase (231 aa).

The protein belongs to the IspD/TarI cytidylyltransferase family. IspD subfamily.

The enzyme catalyses 2-C-methyl-D-erythritol 4-phosphate + CTP + H(+) = 4-CDP-2-C-methyl-D-erythritol + diphosphate. It functions in the pathway isoprenoid biosynthesis; isopentenyl diphosphate biosynthesis via DXP pathway; isopentenyl diphosphate from 1-deoxy-D-xylulose 5-phosphate: step 2/6. Catalyzes the formation of 4-diphosphocytidyl-2-C-methyl-D-erythritol from CTP and 2-C-methyl-D-erythritol 4-phosphate (MEP). This chain is 2-C-methyl-D-erythritol 4-phosphate cytidylyltransferase, found in Lysinibacillus sphaericus (strain C3-41).